A 157-amino-acid polypeptide reads, in one-letter code: SsrA-binding protein (157 aa).

This sequence belongs to the SmpB family.

Its subcellular location is the cytoplasm. Required for rescue of stalled ribosomes mediated by trans-translation. Binds to transfer-messenger RNA (tmRNA), required for stable association of tmRNA with ribosomes. tmRNA and SmpB together mimic tRNA shape, replacing the anticodon stem-loop with SmpB. tmRNA is encoded by the ssrA gene; the 2 termini fold to resemble tRNA(Ala) and it encodes a 'tag peptide', a short internal open reading frame. During trans-translation Ala-aminoacylated tmRNA acts like a tRNA, entering the A-site of stalled ribosomes, displacing the stalled mRNA. The ribosome then switches to translate the ORF on the tmRNA; the nascent peptide is terminated with the 'tag peptide' encoded by the tmRNA and targeted for degradation. The ribosome is freed to recommence translation, which seems to be the essential function of trans-translation. The protein is SsrA-binding protein of Limosilactobacillus fermentum (strain NBRC 3956 / LMG 18251) (Lactobacillus fermentum).